Consider the following 417-residue polypeptide: D-galactonate dehydratase family member RspA (417 aa).

Substrate-binding residues include glutamine 43 and histidine 127. The Proton donor/acceptor role is filled by tyrosine 158. Aspartate 223 is a Mg(2+) binding site. Histidine 225 serves as the catalytic Proton donor/acceptor. 2 residues coordinate Mg(2+): glutamate 249 and glutamate 275. The substrate site is built by glutamate 275, arginine 296, histidine 325, aspartate 329, and glutamate 352.

Belongs to the mandelate racemase/muconate lactonizing enzyme family. GalD subfamily. Requires Mg(2+) as cofactor.

It catalyses the reaction D-gluconate = 2-dehydro-3-deoxy-D-gluconate + H2O. Functionally, has low D-gluconate dehydratase activity (in vitro), suggesting that it has no significant role in D-gluconate degradation in vivo. Has no detectable activity with a panel of 70 other acid sugars (in vitro). The chain is D-galactonate dehydratase family member RspA (rspA) from Pantoea ananatis (strain LMG 20103).